A 122-amino-acid polypeptide reads, in one-letter code: Large ribosomal subunit protein uL14c (122 aa).

This sequence belongs to the universal ribosomal protein uL14 family. In terms of assembly, part of the 50S ribosomal subunit.

The protein localises to the plastid. Its subcellular location is the chloroplast. Its function is as follows. Binds to 23S rRNA. In Angiopteris evecta (Mule's foot fern), this protein is Large ribosomal subunit protein uL14c.